Consider the following 111-residue polypeptide: MASVLEENGYITESCPRTADSDVESGDTARHKLESLLNRNMRIQMTDGRSLIGCFLCTDRDCNVILGSAQEFLRPSDSFRIREPRVLGLAMVPGHHIVSIQVELETSPQYI.

The Sm domain occupies 28–106 (TARHKLESLL…IVSIQVELET (79 aa)).

Belongs to the snRNP Sm proteins family. Component of the N-terminal acetyltransferase C (NatC) complex, which is composed of naa35, naa38 and naa30.

It is found in the cytoplasm. Its function is as follows. Auxillary component of the N-terminal acetyltransferase C (NatC) complex which catalyzes acetylation of N-terminal methionine residues. In Xenopus laevis (African clawed frog), this protein is N-alpha-acetyltransferase 38-B, NatC auxiliary subunit (naa38-b).